The chain runs to 261 residues: Cytochrome c oxidase subunit 3 (261 aa).

Residues Met1–Pro15 lie on the Mitochondrial matrix side of the membrane. Residues Trp16 to Trp34 form a helical membrane-spanning segment. The Mitochondrial intermembrane portion of the chain corresponds to Phe35–Met40. Residues Ala41–Thr66 form a helical membrane-spanning segment. Over Phe67 to Thr72 the chain is Mitochondrial matrix. Residues Pro73–Ser105 traverse the membrane as a helical segment. The Mitochondrial intermembrane portion of the chain corresponds to Leu106–Glu128. Residues Val129–Met152 form a helical membrane-spanning segment. Topologically, residues Glu153 to Asn155 are mitochondrial matrix. Residues Arg156–Glu183 form a helical membrane-spanning segment. Residues Thr184–Asp190 are Mitochondrial intermembrane-facing. The helical transmembrane segment at Gly191–Leu223 threads the bilayer. Over Tyr224 to His232 the chain is Mitochondrial matrix. The chain crosses the membrane as a helical span at residues Phe233–Ile256. Over Tyr257 to Ser261 the chain is Mitochondrial intermembrane.

The protein belongs to the cytochrome c oxidase subunit 3 family. As to quaternary structure, component of the cytochrome c oxidase (complex IV, CIV), a multisubunit enzyme composed of 14 subunits. The complex is composed of a catalytic core of 3 subunits MT-CO1, MT-CO2 and MT-CO3, encoded in the mitochondrial DNA, and 11 supernumerary subunits COX4I, COX5A, COX5B, COX6A, COX6B, COX6C, COX7A, COX7B, COX7C, COX8 and NDUFA4, which are encoded in the nuclear genome. The complex exists as a monomer or a dimer and forms supercomplexes (SCs) in the inner mitochondrial membrane with NADH-ubiquinone oxidoreductase (complex I, CI) and ubiquinol-cytochrome c oxidoreductase (cytochrome b-c1 complex, complex III, CIII), resulting in different assemblies (supercomplex SCI(1)III(2)IV(1) and megacomplex MCI(2)III(2)IV(2)).

The protein resides in the mitochondrion inner membrane. It carries out the reaction 4 Fe(II)-[cytochrome c] + O2 + 8 H(+)(in) = 4 Fe(III)-[cytochrome c] + 2 H2O + 4 H(+)(out). Its function is as follows. Component of the cytochrome c oxidase, the last enzyme in the mitochondrial electron transport chain which drives oxidative phosphorylation. The respiratory chain contains 3 multisubunit complexes succinate dehydrogenase (complex II, CII), ubiquinol-cytochrome c oxidoreductase (cytochrome b-c1 complex, complex III, CIII) and cytochrome c oxidase (complex IV, CIV), that cooperate to transfer electrons derived from NADH and succinate to molecular oxygen, creating an electrochemical gradient over the inner membrane that drives transmembrane transport and the ATP synthase. Cytochrome c oxidase is the component of the respiratory chain that catalyzes the reduction of oxygen to water. Electrons originating from reduced cytochrome c in the intermembrane space (IMS) are transferred via the dinuclear copper A center (CU(A)) of subunit 2 and heme A of subunit 1 to the active site in subunit 1, a binuclear center (BNC) formed by heme A3 and copper B (CU(B)). The BNC reduces molecular oxygen to 2 water molecules using 4 electrons from cytochrome c in the IMS and 4 protons from the mitochondrial matrix. This is Cytochrome c oxidase subunit 3 (MT-CO3) from Canis lupus familiaris (Dog).